The following is a 66-amino-acid chain: Large ribosomal subunit protein bL35 (66 aa).

This sequence belongs to the bacterial ribosomal protein bL35 family.

This is Large ribosomal subunit protein bL35 from Bradyrhizobium diazoefficiens (strain JCM 10833 / BCRC 13528 / IAM 13628 / NBRC 14792 / USDA 110).